Here is a 255-residue protein sequence, read N- to C-terminus: 5'-nucleotidase SurE (255 aa).

A divalent metal cation contacts are provided by aspartate 8, aspartate 9, serine 39, and asparagine 91.

Belongs to the SurE nucleotidase family. A divalent metal cation serves as cofactor.

The protein localises to the cytoplasm. It catalyses the reaction a ribonucleoside 5'-phosphate + H2O = a ribonucleoside + phosphate. Its function is as follows. Nucleotidase that shows phosphatase activity on nucleoside 5'-monophosphates. This chain is 5'-nucleotidase SurE, found in Acinetobacter baylyi (strain ATCC 33305 / BD413 / ADP1).